We begin with the raw amino-acid sequence, 71 residues long: Antimicrobial peptide VpCT4 (71 aa).

Residues 1–23 (MKTQFVILIVAIVILQLISQSEA) form the signal peptide. Residue Leu-39 is modified to Leucine amide. A propeptide spanning residues 40-71 (GKRGVQNMDQFDDIFEPELSEADLRYLQDLLR) is cleaved from the precursor.

The protein belongs to the non-disulfide-bridged peptide (NDBP) superfamily. Short antimicrobial peptide (group 4) family. In terms of tissue distribution, expressed by the venom gland.

It is found in the secreted. The protein localises to the target cell membrane. In terms of biological role, antimicrobial peptide with potent activity against bacteria S.aureus (MIC=9.3 uM), weak activity against E.coli (MIC&gt;100 uM), and weak activity against pathogenic yeasts C.albicans (MIC=100 uM) and C.glabrata (MIC=100 uM). Is not very effective against P.aeruginosa (MIC&gt;300 uM). Also provokes high hemolysis on human erythrocytes (HC(50)=4.8 uM). This is Antimicrobial peptide VpCT4 from Mesomexovis punctatus (Scorpion).